The primary structure comprises 550 residues: ATP synthase subunit alpha (550 aa).

172–179 provides a ligand contact to ATP; sequence GDRKTGKT. Residues 521–550 form a disordered region; the sequence is EPAAEPLAGEEDRETVTRFHDDATDRPAGS. The span at 534 to 550 shows a compositional bias: basic and acidic residues; it reads ETVTRFHDDATDRPAGS.

It belongs to the ATPase alpha/beta chains family. F-type ATPases have 2 components, CF(1) - the catalytic core - and CF(0) - the membrane proton channel. CF(1) has five subunits: alpha(3), beta(3), gamma(1), delta(1), epsilon(1). CF(0) has three main subunits: a(1), b(2) and c(9-12). The alpha and beta chains form an alternating ring which encloses part of the gamma chain. CF(1) is attached to CF(0) by a central stalk formed by the gamma and epsilon chains, while a peripheral stalk is formed by the delta and b chains.

It is found in the cell membrane. The catalysed reaction is ATP + H2O + 4 H(+)(in) = ADP + phosphate + 5 H(+)(out). Functionally, produces ATP from ADP in the presence of a proton gradient across the membrane. The alpha chain is a regulatory subunit. The chain is ATP synthase subunit alpha from Salinispora tropica (strain ATCC BAA-916 / DSM 44818 / JCM 13857 / NBRC 105044 / CNB-440).